The sequence spans 334 residues: Short-chain dehydrogenase/reductase (334 aa).

5 residues coordinate NADP(+): L44, K68, D93, N120, and K152. Residues S176 and Y205 each act as proton donor in the active site. Residues Y205, K209, and N239 each contribute to the NADP(+) site. K209 acts as the Lowers pKa of active site Tyr in catalysis.

It belongs to the short-chain dehydrogenases/reductases (SDR) family.

Its pathway is mycotoxin biosynthesis. Short-chain dehydrogenase/reductase; part of the 2 gene clusters that mediate the biosynthesis of fusicoccins, diterpene glucosides that display phytohormone-like activity and function as potent activators of plasma membrane H(+)-ATPases in plants by modifying 14-3-3 proteins and cause the plant disease constriction canker. The first step in the pathway is performed by the fusicoccadiene synthase PaFS that possesses both prenyl transferase and terpene cyclase activity, converting isopentenyl diphosphate and dimethylallyl diphosphate into geranylgeranyl diphosphate (GGDP) and successively converting GGDP into fusicocca-2,10(14)-diene, a precursor for fusicoccin H. The second step is the oxidation at the C-8 position by the cytochrome P450 monooxygenase PaP450-2 to yield fusicocca-2,10(14)-diene-8-beta-ol. The cytochrome P450 monooxygenase PaP450-1 then catalyzes the hydroxylation at the C-16 position to produce fusicocca-2,10(14)-diene-8-beta,16-diol. The dioxygenase fc-dox then catalyzes the 16-oxydation of fusicocca-2,10(14)-diene-8-beta,16-diol to yield an aldehyde (8-beta-hydroxyfusicocca-1,10(14)-dien-16-al). The short-chain dehydrogenase/reductase fc-sdr catalyzes the reduction of the aldehyde to yield fusicocca-1,10(14)-diene-8-beta,16-diol. The next step is the hydroxylation at C-9 performed by the cytochrome P450 monooxygenase PaP450-3 that leads to fusicoccin H aglycon which is glycosylated to fusicoccin H by the O-glycosyltransferase PaGT. Hydroxylation at C-12 by the cytochrome P450 monooxygenase PaP450-4 leads then to the production of fusicoccin Q and is followed by methylation by the O-methyltransferase PaMT to yield fusicoccin P. Fusicoccin P is further converted to fusicoccin J via prenylation by the O-glucose prenyltransferase PaPT. Cytochrome P450 monooxygenase PaP450-5 then performs hydroxylation at C-19 to yield dideacetyl-fusicoccin A which is acetylated to 3'-O-deacetyl-fusicoccin A by the O-acetyltransferase PaAT-2. Finally, a another acetylation by the O-acetyltransferase PaAT-1 yields fusicoccin A. This is Short-chain dehydrogenase/reductase from Phomopsis amygdali (Fusicoccum amygdali).